A 278-amino-acid chain; its full sequence is Large ribosomal subunit protein uL2 (278 aa).

The disordered stretch occupies residues 223 to 278 (GVAMNPIDHPHGGGEGRTSGGRHPVTPWGFPTKGKKTRSNKRTDTFIVSSRHNRKK).

The protein belongs to the universal ribosomal protein uL2 family. In terms of assembly, part of the 50S ribosomal subunit. Forms a bridge to the 30S subunit in the 70S ribosome.

In terms of biological role, one of the primary rRNA binding proteins. Required for association of the 30S and 50S subunits to form the 70S ribosome, for tRNA binding and peptide bond formation. It has been suggested to have peptidyltransferase activity; this is somewhat controversial. Makes several contacts with the 16S rRNA in the 70S ribosome. The polypeptide is Large ribosomal subunit protein uL2 (Methylobacterium nodulans (strain LMG 21967 / CNCM I-2342 / ORS 2060)).